We begin with the raw amino-acid sequence, 149 residues long: Ribose-5-phosphate isomerase B (149 aa).

9–10 (DH) contacts D-ribulose 5-phosphate. Cys-66 serves as the catalytic Proton acceptor. 67–71 (GTGVG) is a binding site for D-ribulose 5-phosphate. Catalysis depends on His-99, which acts as the Proton donor. Residues Asn-100, Arg-110, Arg-133, and Arg-137 each contribute to the D-ribulose 5-phosphate site.

It belongs to the LacAB/RpiB family. In terms of assembly, homodimer, and homotetramer.

It catalyses the reaction aldehydo-D-ribose 5-phosphate = D-ribulose 5-phosphate. It carries out the reaction D-allose 6-phosphate = D-allulose 6-phosphate. It functions in the pathway carbohydrate degradation; pentose phosphate pathway; D-ribose 5-phosphate from D-ribulose 5-phosphate (non-oxidative stage): step 1/1. Its activity is regulated as follows. Inhibited by iodoacetate and glucose 6-phosphate. Catalyzes the interconversion of ribulose-5-P and ribose-5-P. It probably also has activity on D-allose 6-phosphate. The chain is Ribose-5-phosphate isomerase B from Escherichia coli (strain K12).